An 864-amino-acid polypeptide reads, in one-letter code: Calphotin (864 aa).

The leucine-zipper stretch occupies residues 816–858; it reads LQTTDVSLLAIAATLDAIGEKLKDQKARNQQVMDRLCEIEKIL.

As to quaternary structure, homodimer. Soma and axons of photoreceptor cells of compound eyes and ocelli.

Its subcellular location is the cytoplasm. Plays important roles in both rhabdomere development and in photoreceptor cell survival. Might function as a calcium-sequestering 'sponge' to regulate the amount of free cytoplasmic calcium. It binds 0.3 mole of Ca(2+) per mole of protein. This Drosophila melanogaster (Fruit fly) protein is Calphotin (Cpn).